An 810-amino-acid polypeptide reads, in one-letter code: Coiled-coil domain-containing protein 15 (810 aa).

Coiled-coil stretches lie at residues 65-89, 160-189, and 638-669; these read VVEE…RQVR, DGEN…SFKT, and MDIE…EQQR.

Interacts with POC5, POC1B, CETN2 and FAM161A.

It localises to the cytoplasm. Its subcellular location is the cytoskeleton. The protein resides in the microtubule organizing center. It is found in the centrosome. The protein localises to the centriole. It localises to the centriolar satellite. In terms of biological role, plays an important role in primary cilium assembly, maintenance, and length regulation. Interacts with centriole inner scaffold proteins to promote proper centriole size and integrity and assembly of functional cilia. Required for the recruitment of both the inner scaffold protein POC1B and the distal SFI1/CETN2 complex to centrioles. This Mus musculus (Mouse) protein is Coiled-coil domain-containing protein 15 (Ccdc15).